A 305-amino-acid chain; its full sequence is UDP-3-O-acyl-N-acetylglucosamine deacetylase (305 aa).

His78, His237, and Asp241 together coordinate Zn(2+). Residue His264 is the Proton donor of the active site.

This sequence belongs to the LpxC family. Requires Zn(2+) as cofactor.

The enzyme catalyses a UDP-3-O-[(3R)-3-hydroxyacyl]-N-acetyl-alpha-D-glucosamine + H2O = a UDP-3-O-[(3R)-3-hydroxyacyl]-alpha-D-glucosamine + acetate. It participates in glycolipid biosynthesis; lipid IV(A) biosynthesis; lipid IV(A) from (3R)-3-hydroxytetradecanoyl-[acyl-carrier-protein] and UDP-N-acetyl-alpha-D-glucosamine: step 2/6. Its function is as follows. Catalyzes the hydrolysis of UDP-3-O-myristoyl-N-acetylglucosamine to form UDP-3-O-myristoylglucosamine and acetate, the committed step in lipid A biosynthesis. The sequence is that of UDP-3-O-acyl-N-acetylglucosamine deacetylase from Burkholderia ambifaria (strain MC40-6).